The following is a 316-amino-acid chain: tRNA dimethylallyltransferase (316 aa).

Residue 15–22 (GPTASGKS) coordinates ATP. 17-22 (TASGKS) serves as a coordination point for substrate. Residues 40-43 (DSRQ) form an interaction with substrate tRNA region.

This sequence belongs to the IPP transferase family. In terms of assembly, monomer. It depends on Mg(2+) as a cofactor.

It carries out the reaction adenosine(37) in tRNA + dimethylallyl diphosphate = N(6)-dimethylallyladenosine(37) in tRNA + diphosphate. In terms of biological role, catalyzes the transfer of a dimethylallyl group onto the adenine at position 37 in tRNAs that read codons beginning with uridine, leading to the formation of N6-(dimethylallyl)adenosine (i(6)A). This chain is tRNA dimethylallyltransferase, found in Chlorobium limicola (strain DSM 245 / NBRC 103803 / 6330).